An 89-amino-acid chain; its full sequence is Cell division protein FtsL (89 aa).

Residues 1–6 lie on the Cytoplasmic side of the membrane; it reads MAMNKL. A helical membrane pass occupies residues 7-24; the sequence is NFLLLLAVCVSAFSVVMQ. Topologically, residues 25-89 are periplasmic; sequence QNQYRLNFTA…GNTFMVEHQR (65 aa). A coiled-coil region spans residues 33–73; the sequence is TALDKAKKQEIALEQDYAQMRLQQARLANHEAIRAAAEKQN.

This sequence belongs to the FtsL family. Part of a complex composed of FtsB, FtsL and FtsQ.

The protein localises to the cell inner membrane. Essential cell division protein. May link together the upstream cell division proteins, which are predominantly cytoplasmic, with the downstream cell division proteins, which are predominantly periplasmic. The chain is Cell division protein FtsL from Neisseria meningitidis serogroup B (strain ATCC BAA-335 / MC58).